Here is a 797-residue protein sequence, read N- to C-terminus: uncharacterized protein (797 aa).

A compositionally biased stretch (basic and acidic residues) spans S394–D403. Residues S394 to N724 form a disordered region. The span at E404–D713 shows a compositional bias: acidic residues.

The protein belongs to the herpesviridae BBRF2 family.

This is an uncharacterized protein from Saimiriine herpesvirus 2 (strain 11) (SaHV-2).